We begin with the raw amino-acid sequence, 194 residues long: Ras-like protein RAS1 (194 aa).

Residue 16 to 23 (GAGGVGKS) participates in GTP binding. The short motif at 38–46 (YDPTIEDSY) is the Effector region element. Residues 63-67 (DTAGQ) and 122-125 (NKVD) each bind GTP. At Cys-191 the chain carries Cysteine methyl ester. Residue Cys-191 is the site of S-geranylgeranyl cysteine attachment. The propeptide at 192-194 (TLL) is removed in mature form.

It belongs to the small GTPase superfamily. Ras family.

Its subcellular location is the cell membrane. The catalysed reaction is GTP + H2O = GDP + phosphate + H(+). Alternates between an inactive form bound to GDP and an active form bound to GTP. Activated by a guanine nucleotide-exchange factor (GEF) and inactivated by a GTPase-activating protein (GAP). In terms of biological role, ras proteins bind GDP/GTP and possess intrinsic GTPase activity. This Hydra vulgaris (Hydra) protein is Ras-like protein RAS1 (RAS1).